Consider the following 300-residue polypeptide: GTPase Era (300 aa).

The Era-type G domain maps to 8 to 176; it reads RCGYVAIVGR…EGLIAKHLPE (169 aa). Positions 16 to 23 are G1; it reads GRPNVGKS. 16–23 contacts GTP; sequence GRPNVGKS. A G2 region spans residues 42–46; the sequence is QTTRH. Residues 63–66 are G3; sequence DTPG. GTP-binding positions include 63–67 and 125–128; these read DTPGM and NKTD. The G4 stretch occupies residues 125–128; it reads NKTD. Positions 155 to 157 are G5; it reads VSA. The KH type-2 domain occupies 199–283; sequence VREKIMRQLG…MLNLWVKVKG (85 aa).

The protein belongs to the TRAFAC class TrmE-Era-EngA-EngB-Septin-like GTPase superfamily. Era GTPase family. In terms of assembly, monomer.

The protein resides in the cytoplasm. It is found in the cell inner membrane. Its function is as follows. An essential GTPase that binds both GDP and GTP, with rapid nucleotide exchange. Plays a role in 16S rRNA processing and 30S ribosomal subunit biogenesis and possibly also in cell cycle regulation and energy metabolism. This Pseudomonas fluorescens (strain ATCC BAA-477 / NRRL B-23932 / Pf-5) protein is GTPase Era.